The following is a 62-amino-acid chain: Photosystem II reaction center protein Z (62 aa).

2 consecutive transmembrane segments (helical) span residues 8-28 (TLLAFIGLSLALVIGVPVLLA) and 41-61 (FSGSALWMLLVFVVGALNSFV).

Belongs to the PsbZ family. As to quaternary structure, PSII is composed of 1 copy each of membrane proteins PsbA, PsbB, PsbC, PsbD, PsbE, PsbF, PsbH, PsbI, PsbJ, PsbK, PsbL, PsbM, PsbT, PsbY, PsbZ, Psb30/Ycf12, at least 3 peripheral proteins of the oxygen-evolving complex and a large number of cofactors. It forms dimeric complexes.

It localises to the plastid. Its subcellular location is the chloroplast thylakoid membrane. Its function is as follows. May control the interaction of photosystem II (PSII) cores with the light-harvesting antenna, regulates electron flow through the 2 photosystem reaction centers. PSII is a light-driven water plastoquinone oxidoreductase, using light energy to abstract electrons from H(2)O, generating a proton gradient subsequently used for ATP formation. This is Photosystem II reaction center protein Z from Ostreococcus tauri.